A 130-amino-acid polypeptide reads, in one-letter code: Follitropin subunit beta (130 aa).

The N-terminal stretch at 1-20 (MMKSIQLCILLWCLRAVCCH) is a signal peptide. 6 disulfide bridges follow: C22-C70, C36-C85, C39-C123, C47-C101, C51-C103, and C106-C113. N-linked (GlcNAc...) asparagine glycans are attached at residues N26 and N43.

Belongs to the glycoprotein hormones subunit beta family. Heterodimer. The active follitropin is a heterodimer composed of an alpha chain/CGA shared with other hormones and a unique beta chain/FSHB shown here.

Its subcellular location is the secreted. Functionally, together with the alpha chain CGA constitutes follitropin, the follicle-stimulating hormone, and provides its biological specificity to the hormone heterodimer. Binds FSHR, a G protein-coupled receptor, on target cells to activate downstream signaling pathways. Follitropin is involved in follicle development and spermatogenesis in reproductive organs. This chain is Follitropin subunit beta (Fshb), found in Rattus norvegicus (Rat).